The primary structure comprises 117 residues: Small ribosomal subunit protein uS8c (117 aa).

Belongs to the universal ribosomal protein uS8 family. As to quaternary structure, part of the 30S ribosomal subunit.

It localises to the plastid. Its subcellular location is the chloroplast. Its function is as follows. One of the primary rRNA binding proteins, it binds directly to 16S rRNA central domain where it helps coordinate assembly of the platform of the 30S subunit. The sequence is that of Small ribosomal subunit protein uS8c (rps8) from Cyanidioschyzon merolae (strain NIES-3377 / 10D) (Unicellular red alga).